Consider the following 100-residue polypeptide: Small ribosomal subunit protein bS20 (100 aa).

Residues 1 to 22 are compositionally biased toward basic residues; the sequence is MASGKPKKKNPRLASGRKRARQ. The tract at residues 1–26 is disordered; it reads MASGKPKKKNPRLASGRKRARQGLKL.

This sequence belongs to the bacterial ribosomal protein bS20 family.

Its function is as follows. Binds directly to 16S ribosomal RNA. This chain is Small ribosomal subunit protein bS20, found in Acidovorax ebreus (strain TPSY) (Diaphorobacter sp. (strain TPSY)).